Here is a 376-residue protein sequence, read N- to C-terminus: Lipoyl synthase 2, mitochondrial (376 aa).

Cys-109, Cys-114, Cys-120, Cys-140, Cys-144, Cys-147, and Ser-356 together coordinate [4Fe-4S] cluster. Residues 125-345 (ETGTATATIM…QTLGMEMGFR (221 aa)) form the Radical SAM core domain.

It belongs to the radical SAM superfamily. Lipoyl synthase family. [4Fe-4S] cluster is required as a cofactor.

It localises to the mitochondrion. It carries out the reaction [[Fe-S] cluster scaffold protein carrying a second [4Fe-4S](2+) cluster] + N(6)-octanoyl-L-lysyl-[protein] + 2 oxidized [2Fe-2S]-[ferredoxin] + 2 S-adenosyl-L-methionine + 4 H(+) = [[Fe-S] cluster scaffold protein] + N(6)-[(R)-dihydrolipoyl]-L-lysyl-[protein] + 4 Fe(3+) + 2 hydrogen sulfide + 2 5'-deoxyadenosine + 2 L-methionine + 2 reduced [2Fe-2S]-[ferredoxin]. Its pathway is protein modification; protein lipoylation via endogenous pathway; protein N(6)-(lipoyl)lysine from octanoyl-[acyl-carrier-protein]: step 2/2. In terms of biological role, catalyzes the radical-mediated insertion of two sulfur atoms into the C-6 and C-8 positions of the octanoyl moiety bound to the lipoyl domains of lipoate-dependent enzymes, thereby converting the octanoylated domains into lipoylated derivatives. The sequence is that of Lipoyl synthase 2, mitochondrial from Pisum sativum (Garden pea).